The chain runs to 273 residues: Multivesicular body subunit 12A (273 aa).

One can recognise an MABP domain in the interval 9–151 (GMPLAGLAWS…GFAIWCRKAK (143 aa)). A Phosphothreonine modification is found at Thr-130. A disordered region spans residues 154–186 (RPVPKPRALSRDVRDLSLDSPGQPSKGGFPERT). Residues 155 to 160 (PVPKPR) carry the SH3-binding motif. Residues Ser-163, Ser-170, Ser-195, and Ser-202 each carry the phosphoserine modification. The interval 192–273 (SRASTLRRND…AAARLPPSVS (82 aa)) is interaction with TSG101, VPS37B and VPS28. Residue Tyr-204 is modified to Phosphotyrosine. Phosphoserine is present on Ser-207. A UMA domain is found at 215–265 (MDGVPFTLHPRFEGKSCGPLAFSAFADLTIKSLADIEAEYNYGFVVEKTAA).

It belongs to the MVB12 family. Component of the ESCRT-I complex (endosomal sorting complex required for transport I) which consists of TSG101, VPS28, a VPS37 protein (VPS37A to -D) and MVB12A or MVB12B in a 1:1:1:1 stoichiometry. Interacts with CD2AP and CIN85/SH3KBP1. Interacts with CD2AP (via one of the SH3 domains). Interacts with TSG101; the association appears to be mediated by the TSG101-VPS37 binary subcomplex. Interacts with VPS28. Interacts with VPS37B; the association appears to be mediated by the TSG101-VPS37 binary subcomplex. Interacts with VPS37C; the association appears to be mediated by the TSG101-VPS37 binary subcomplex. Interacts with VPS37D; the association appears to be mediated by the TSG101-VPS37 binary subcomplex. Interacts with CEP55. In terms of processing, phosphorylated on Tyr-204 upon EGF stimulation. Phosphorylation is required for interaction with CD2AP and CIN85/SH3KBP1.

It is found in the cytoplasm. It localises to the cytoskeleton. The protein localises to the nucleus. The protein resides in the endosome. Its subcellular location is the microtubule organizing center. It is found in the centrosome. It localises to the late endosome membrane. Component of the ESCRT-I complex, a regulator of vesicular trafficking process. Required for the sorting of endocytic ubiquitinated cargos into multivesicular bodies. May be involved in the ligand-mediated internalization and down-regulation of EGF receptor. In Bos taurus (Bovine), this protein is Multivesicular body subunit 12A (MVB12A).